Here is a 458-residue protein sequence, read N- to C-terminus: Glycogen synthase (458 aa).

ADP-alpha-D-glucose is bound at residue lysine 15.

This sequence belongs to the glycosyltransferase 1 family. Bacterial/plant glycogen synthase subfamily.

It catalyses the reaction [(1-&gt;4)-alpha-D-glucosyl](n) + ADP-alpha-D-glucose = [(1-&gt;4)-alpha-D-glucosyl](n+1) + ADP + H(+). It participates in glycan biosynthesis; glycogen biosynthesis. Its function is as follows. Synthesizes alpha-1,4-glucan chains using ADP-glucose. The polypeptide is Glycogen synthase (Gloeobacter violaceus (strain ATCC 29082 / PCC 7421)).